The following is a 140-amino-acid chain: Pro-vaccinia growth factor (140 aa).

A signal peptide spans 1 to 18 (MLINYLMLLFAAMIIRSF). Residues 19-100 (ADSGNAIETT…SEKPNTTTSY (82 aa)) lie on the Extracellular side of the membrane. N-linked (GlcNAc...) asparagine; by host glycosylation is present at N34. In terms of domain architecture, EGF-like spans 41–81 (AIRLCGPEGDGYCLHGDCIHARDIDGMYCRCSHGYTGIRCQ). 3 disulfides stabilise this stretch: C45–C58, C53–C69, and C71–C80. The N-linked (GlcNAc...) asparagine; by host glycan is linked to N95. Residues 101–121 (IPSPGIMLVLVGIIIITCCLL) traverse the membrane as a helical segment. Topologically, residues 122 to 140 (SVYRFTRRTKLPIQDMVVP) are cytoplasmic.

This sequence belongs to the orthopoxvirus OPG019 family. In terms of assembly, interacts with host EGFR.

The protein localises to the host membrane. Its subcellular location is the secreted. Functionally, stimulates cellular proliferation (hyperplasia)and mobility around infected cells to promote rapid and efficient spread of infection. This effect is beneficial for virus replication in vivo, because poxviruses replicate possibly better in proliferating cells than in quiescent cells. Acts by binding host EGFR, inducing its dimerization, autophosphorylation and leading to activation of several cellular pathways regulating cell proliferation or cell survival. The activation by host EGFR of mitogen activated protein kinases (MAPK) and extracellular-signal regulated kinases (ERK) are essential for the positive effect of vaccinia growth factor on poxvirus virulence in vivo. This Homo sapiens (Human) protein is Pro-vaccinia growth factor (OPG019).